Here is a 369-residue protein sequence, read N- to C-terminus: tRNA-specific 2-thiouridylase MnmA (369 aa).

ATP is bound by residues Gly-7–Ser-14 and Met-33. An interaction with target base in tRNA region spans residues Asn-93 to Asp-95. Cys-98 serves as the catalytic Nucleophile. Cys-98 and Cys-195 form a disulfide bridge. ATP is bound at residue Gly-123. Residues Lys-145–Gln-147 are interaction with tRNA. Cys-195 acts as the Cysteine persulfide intermediate in catalysis. The interval Arg-307 to Tyr-308 is interaction with tRNA.

It belongs to the MnmA/TRMU family. Interacts with TusE.

The protein localises to the cytoplasm. It catalyses the reaction S-sulfanyl-L-cysteinyl-[protein] + uridine(34) in tRNA + AH2 + ATP = 2-thiouridine(34) in tRNA + L-cysteinyl-[protein] + A + AMP + diphosphate + H(+). Functionally, catalyzes the 2-thiolation of uridine at the wobble position (U34) of tRNA(Lys), tRNA(Glu) and tRNA(Gln), leading to the formation of s(2)U34, the first step of tRNA-mnm(5)s(2)U34 synthesis. Sulfur is provided by IscS, via a sulfur-relay system. Binds ATP and its substrate tRNAs. The sequence is that of tRNA-specific 2-thiouridylase MnmA from Blochmanniella floridana.